The primary structure comprises 87 residues: Large ribosomal subunit protein eL20 (87 aa).

This sequence belongs to the eukaryotic ribosomal protein eL20 family. Part of the 50S ribosomal subunit. Binds 23S rRNA.

This chain is Large ribosomal subunit protein eL20, found in Staphylothermus marinus (strain ATCC 43588 / DSM 3639 / JCM 9404 / F1).